The following is an 811-amino-acid chain: Protein kinase C-binding protein NELL2a (811 aa).

The signal sequence occupies residues 1–18; that stretch reads MAFLQLFVGLLCGAAVSA. Positions 54–225 constitute a Laminin G-like domain; sequence AFMFQGSSRS…TQCPDLNRTC (172 aa). N-linked (GlcNAc...) asparagine glycosylation is found at N222, N290, and N295. One can recognise a VWFC 1 domain in the interval 269 to 328; sequence RTCRVKDQIYREEQSWTDGCKNCTCSNGTVRCEKILCPPLDCPDGTTPAYVTGTCCKECQ. The EGF-like 1 domain maps to 395–437; it reads GHDFCAEENICSENSDCVNLDAGASCGCKNGFRPLRLDSAYCE. 3 disulfides stabilise this stretch: C399–C411, C405–C420, and C422–C436. Residues D438, I439, and E441 each contribute to the Ca(2+) site. The region spanning 438–479 is the EGF-like 2; calcium-binding domain; that stretch reads DIDECAEGRHYCRENTECVNTAGSFMCVCHTGFIRIDDYSCT. 9 cysteine pairs are disulfide-bonded: C442–C455, C449–C464, C466–C478, C484–C497, C491–C506, C508–C519, C523–C533, C527–C539, and C541–C550. Ca(2+) is bound by residues N457, T458, and S461. In terms of domain architecture, EGF-like 3; calcium-binding spans 480-520; that stretch reads EHDECASGQHDCDENALCFNTVGGHSCSCKPGYSGNGTVCR. N515 is a glycosylation site (N-linked (GlcNAc...) asparagine). Positions 521–551 constitute an EGF-like 4 domain; it reads ALCDGRCLNGGSCASPNVCVCVQGFSGQNCE. Positions 553, 554, and 556 each coordinate Ca(2+). The 40-residue stretch at 553–592 folds into the EGF-like 5; calcium-binding domain; sequence DIDECSEGLVQCAAHATCVNLPGWYHCECRDGYHDNEVFS. Disulfide bonds link C557-C570, C564-C579, and C581-C598. Residues N572, L573, and W576 each contribute to the Ca(2+) site. Ca(2+) contacts are provided by D600, I601, and E603. In terms of domain architecture, EGF-like 6; calcium-binding spans 600–635; the sequence is DIDECRTGRSTCANDTVCFNLDGGFDCRCPHGHNCS. 3 disulfide bridges follow: C604/C617, C611/C626, and C628/C634. N-linked (GlcNAc...) asparagine glycosylation is present at N613. The Ca(2+) site is built by N619, L620, and G623. An N-linked (GlcNAc...) asparagine glycan is attached at N633. 2 consecutive VWFC domains span residues 636-691 and 696-754; these read GDCI…PECD and SQCL…PRCV.

As to quaternary structure, homotrimer.

The protein resides in the secreted. Its function is as follows. May regulate neuronal differentiation, polarization and axon guidance. This chain is Protein kinase C-binding protein NELL2a (nell2a), found in Danio rerio (Zebrafish).